Consider the following 284-residue polypeptide: Pollen allergen Phl p 5b (284 aa).

A signal peptide spans 1–19; it reads AAAAVPRRGPRGGPGRSYT. Residues 1 to 21 are disordered; that stretch reads AAAAVPRRGPRGGPGRSYTAD.

This sequence belongs to the Poa p IX/Phl p VI allergen family. As to quaternary structure, homodimer; disulfide-linked.

Its function is as follows. Has ribonuclease activity. May be involved in host-pathogen interactions. This is Pollen allergen Phl p 5b from Phleum pratense (Common timothy).